Consider the following 86-residue polypeptide: Bradykinin-potentiating peptide 25.12 (86 aa).

A signal peptide spans 1-22 (MNKRVLLVIFFVTLLIADEVNS). The disordered stretch occupies residues 67–86 (APAAAAAPEEPPVEQRRRRR).

Belongs to the non-disulfide-bridged peptide (NDBP) superfamily. Long chain multifunctional peptide (group 2) family. Expressed by the venom gland.

It is found in the secreted. Its function is as follows. Inhibits angiotensin-converting enzyme (ACE), but does not serve as substrate for the enzyme. Potentiates bradykinin (BK) on the isolated guinea pig ileum as well as the isolated rat uterus for contraction. Also potentiates in vivo the depressor effect of BK on arterial blood pressure in the normotensive anesthetized rat. The polypeptide is Bradykinin-potentiating peptide 25.12 (Lychas mucronatus (Chinese swimming scorpion)).